The following is a 335-amino-acid chain: Ferrochelatase (335 aa).

The Fe cation site is built by His-207 and Glu-288.

This sequence belongs to the ferrochelatase family.

Its subcellular location is the cytoplasm. The enzyme catalyses heme b + 2 H(+) = protoporphyrin IX + Fe(2+). It functions in the pathway porphyrin-containing compound metabolism; protoheme biosynthesis; protoheme from protoporphyrin-IX: step 1/1. Functionally, catalyzes the ferrous insertion into protoporphyrin IX. This chain is Ferrochelatase, found in Helicobacter pylori (strain J99 / ATCC 700824) (Campylobacter pylori J99).